We begin with the raw amino-acid sequence, 602 residues long: Elongation factor 4 (602 aa).

The tr-type G domain maps to 7–189 (KKIRNFSIIA…SIVKNVPSPK (183 aa)). Residues 19–24 (DHGKST) and 136–139 (NKID) contribute to the GTP site.

It belongs to the TRAFAC class translation factor GTPase superfamily. Classic translation factor GTPase family. LepA subfamily.

The protein resides in the cell membrane. It carries out the reaction GTP + H2O = GDP + phosphate + H(+). Required for accurate and efficient protein synthesis under certain stress conditions. May act as a fidelity factor of the translation reaction, by catalyzing a one-codon backward translocation of tRNAs on improperly translocated ribosomes. Back-translocation proceeds from a post-translocation (POST) complex to a pre-translocation (PRE) complex, thus giving elongation factor G a second chance to translocate the tRNAs correctly. Binds to ribosomes in a GTP-dependent manner. The sequence is that of Elongation factor 4 from Alkaliphilus oremlandii (strain OhILAs) (Clostridium oremlandii (strain OhILAs)).